We begin with the raw amino-acid sequence, 510 residues long: Dermokine (510 aa).

Residues 1–21 (MKLKGSLACLLLFLLLGSGEA) form the signal peptide. The disordered stretch occupies residues 117–362 (VDPAHKSWQG…SSGEGEAVSG (246 aa)). Residues 124–137 (WQGTPGSNGAWGTN) are compositionally biased toward polar residues. Residues 141–158 (PSGGHGIPGSQGSSGGPG) show a composition bias toward gly residues. A compositionally biased stretch (polar residues) spans 194-221 (GANSQGTSPQPGSVRSNNNRNTECTTPP). 3 stretches are compositionally biased toward gly residues: residues 222-231 (GSGGSSGNSG), 240-254 (TNGGGSSGGSNGGSN), and 264-292 (SNGGGSSNSGGSNGGGSNGGGSSNGGGSN). 2 stretches are compositionally biased toward low complexity: residues 293–303 (AGSSGSSGSSS) and 319–332 (PSPSSGSRVGSGVR). Gly residues predominate over residues 344 to 355 (GGSGGQGQGSSG).

It belongs to the dermokine family. In terms of assembly, homooligomer. Seems to be able to homodimerize and homotrimerize. In terms of processing, O-glycosylated.

The protein resides in the secreted. Functionally, may act as a soluble regulator of keratinocyte differentiation. This Bos taurus (Bovine) protein is Dermokine (DMKN).